A 242-amino-acid chain; its full sequence is MTKLFIPYIMGDKDLIENATLLSENGADIIEIGVPFSDPVADGPVIMEAGQQAIKQGITIDYIFEQLEKHGNQIKCQYVLMTYYNIICHYGEQAFFEKCRDTGVYGLIIPDLPFELSQRLKQQFSHYGVKIISLVAMTTDDKRIKEIVSHAEGFIYTVTMNATTGQNGAFHPELKRKIESIKAIANVPVVAGFGIRTPQHVADIKEVADGIVIGSEIVKRFKSNTREEIIKYLQSIQQTLNN.

Catalysis depends on proton acceptor residues Glu-31 and Asp-42.

The protein belongs to the TrpA family. Tetramer of two alpha and two beta chains.

The catalysed reaction is (1S,2R)-1-C-(indol-3-yl)glycerol 3-phosphate + L-serine = D-glyceraldehyde 3-phosphate + L-tryptophan + H2O. It functions in the pathway amino-acid biosynthesis; L-tryptophan biosynthesis; L-tryptophan from chorismate: step 5/5. Its function is as follows. The alpha subunit is responsible for the aldol cleavage of indoleglycerol phosphate to indole and glyceraldehyde 3-phosphate. This chain is Tryptophan synthase alpha chain, found in Staphylococcus aureus (strain bovine RF122 / ET3-1).